Reading from the N-terminus, the 758-residue chain is Transmembrane E3 ubiquitin-protein ligase 1 (758 aa).

Positions 1–26 (MEIDGNTLVFIIVILFLFFSSPGGDG) are cleaved as a signal peptide. The Lumenal portion of the chain corresponds to 27–398 (VSSQYEFNQL…YELKIMSIRK (372 aa)). Residues 399 to 419 (HLLFGIALFAAQIYLLLTQMH) traverse the membrane as a helical segment. Topologically, residues 420–431 (HTNTPSMVNKIS) are cytoplasmic. Residues 432–452 (FYCFSMINLVDGSLATLYFVA) form a helical membrane-spanning segment. The Lumenal portion of the chain corresponds to 453 to 458 (ASVVPE). The helical transmembrane segment at 459–479 (LYLPLVISAFSCFILASIFEI) threads the bilayer. The Cytoplasmic segment spans residues 480–523 (RYLISIYASQVNEQNVGIINLLRGNTGTYDENRPRPAFIPDEGS). The helical transmembrane segment at 524 to 544 (IGGSLYGRFFFMLIIFTFLIL) threads the bilayer. At 545 to 553 (SSTSWPRQL) the chain is on the lumenal side. A helical transmembrane segment spans residues 554 to 574 (RMVFEYILIFILNSYWIPQIF). Topologically, residues 575–602 (RNAVKGIPSRRERARSSIGGNRSQNKMP) are cytoplasmic. A helical transmembrane segment spans residues 603 to 623 (LLWSFVIGTTIIRSLPVVYVF). Residues 624–635 (TYSSNVFRHHKD) lie on the Lumenal side of the membrane. Residues 636-656 (VHFVVFLSLWLLFQISILYSQ) traverse the membrane as a helical segment. The Cytoplasmic portion of the chain corresponds to 657–758 (DVLGSRWFLP…PVCRSPLPPL (102 aa)). The RING-type; atypical zinc finger occupies 699 to 752 (CAICMSDVPIYIEEIPETHKVDQHSYMVTPCNHVFHTSCLENWMNYKLQCPVCR).

Component of the DSC E3 ligase complexes composed of at least TUL1, DSC2, DSC3, UBX3, CDC48 as well as VLD1 for the vacuole-localized complex or GLD1 for the Golgi/endosome-localized complex. Interacts with UBC4.

It localises to the golgi apparatus membrane. The enzyme catalyses S-ubiquitinyl-[E2 ubiquitin-conjugating enzyme]-L-cysteine + [acceptor protein]-L-lysine = [E2 ubiquitin-conjugating enzyme]-L-cysteine + N(6)-ubiquitinyl-[acceptor protein]-L-lysine.. It participates in protein modification; protein ubiquitination. Its function is as follows. Catalytic component of the DSC E3 ubiquitin ligase complexes that tag proteins present in Golgi, endosome and vacuole membranes and function in protein homeostasis under non-stress conditions and support a role in protein quality control. Mediates ubiquitination of vacuolar proteins such as CPS1, PPN1, PEP12 and other proteins containing exposed hydrophilic residues within their transmembrane domains, leading to their sorting into internal vesicles in late endosomes. Targets also the unpalmitoylated endosomal SNARE TLG1 to the MVB pathway. The polypeptide is Transmembrane E3 ubiquitin-protein ligase 1 (TUL1) (Saccharomyces cerevisiae (strain ATCC 204508 / S288c) (Baker's yeast)).